The sequence spans 233 residues: Large ribosomal subunit protein uL1 (233 aa).

Belongs to the universal ribosomal protein uL1 family. In terms of assembly, part of the 50S ribosomal subunit.

Binds directly to 23S rRNA. The L1 stalk is quite mobile in the ribosome, and is involved in E site tRNA release. In terms of biological role, protein L1 is also a translational repressor protein, it controls the translation of the L11 operon by binding to its mRNA. This is Large ribosomal subunit protein uL1 from Shewanella sediminis (strain HAW-EB3).